A 1032-amino-acid chain; its full sequence is Putative oxidoreductase YgfK (1032 aa).

The 31-residue stretch at 928–958 (RFQTLHLDAYCNECGNCAQFCPWNGKPYKDK) folds into the 4Fe-4S ferredoxin-type domain. 4 residues coordinate [4Fe-4S] cluster: C938, C941, C944, and C948.

[4Fe-4S] cluster is required as a cofactor.

In terms of biological role, could be an iron-sulfur flavoprotein with NADPH:O(2) oxidoreductase activity. The sequence is that of Putative oxidoreductase YgfK (ygfK) from Escherichia coli O157:H7.